The sequence spans 496 residues: Cyclin-dependent kinase 16 (496 aa).

Positions 1–97 are disordered; the sequence is MDRMKKIKRQ…TSSDEVQSPV (97 aa). Position 12 is a phosphoserine; by BRSK2 (serine 12). Phosphoserine occurs at positions 36, 42, 64, 65, 78, 82, and 89. Residues 69–78 are compositionally biased toward basic and acidic residues; sequence IVHEDLKMGS. Residues 83–93 are compositionally biased toward polar residues; the sequence is DQASATSSDEV. Serine 95 bears the Phosphoserine; by CDK5 mark. 6 positions are modified to phosphoserine: serine 110, serine 119, serine 138, serine 146, serine 153, and serine 155. A Protein kinase domain is found at 165-446; sequence YIKLDKLGEG…AEDAMKHPFF (282 aa). ATP is bound by residues 171-179 and lysine 194; that span reads LGEGTYATV. Phosphothreonine is present on threonine 175. Catalysis depends on aspartate 286, which acts as the Proton acceptor. Phosphothreonine is present on threonine 380. Residues serine 391, serine 478, and serine 480 each carry the phosphoserine modification.

This sequence belongs to the protein kinase superfamily. CMGC Ser/Thr protein kinase family. CDC2/CDKX subfamily. Found in a complex containing CABLES1, CDK17 and TDRD7. Interacts with BRSK2. Identified in a complex with NSF, syntaxin-1, synaptotagmin, SYN1, SYP and CDK5R1. Interacts with YWHAH, YWHAQ and YWHAZ. Interacts with CCNY; this interaction increases the CDK16 kinase activity. Interacts with CCNYL1; this interaction mutually increases the stability of CDK16 and CCNYL1 and increases the kinase activity of CDK16. Interacts with NSF. Phosphorylation of CDK16 is essential for the binding of CCNY, but also essential for the regulation of CDK16 kinase activity. Phosphorylation of CDK16 is essential for the binding of CCNYl1, but also essential for the regulation of CDK16 kinase activity. Ser-146 and Ser-153 are the most critical sites for the binding of CCNYL1 and for modulating CDK16 kinase activity. Phosphorylation at Ser-153 inhibits kinase activity. Detected in pancreas islets (at protein level). Detected in brain and pancreas.

The protein localises to the cytoplasm. Its subcellular location is the cytoplasmic vesicle. The protein resides in the secretory vesicle. It is found in the cell membrane. It localises to the synapse. The protein localises to the synaptosome. The enzyme catalyses L-seryl-[protein] + ATP = O-phospho-L-seryl-[protein] + ADP + H(+). It carries out the reaction L-threonyl-[protein] + ATP = O-phospho-L-threonyl-[protein] + ADP + H(+). Protein kinase that plays a role in vesicle-mediated transport processes and exocytosis. Regulates GH1 release by brain neurons. Phosphorylates NSF, and thereby regulates NSF oligomerization. Required for normal spermatogenesis. Regulates neuron differentiation and dendrite development. Plays a role in the regulation of insulin secretion in response to changes in blood glucose levels. Can phosphorylate CCNY at 'Ser-336' (in vitro). The polypeptide is Cyclin-dependent kinase 16 (CDK16) (Homo sapiens (Human)).